The sequence spans 445 residues: Phosphoglucosamine mutase (445 aa).

The active-site Phosphoserine intermediate is the serine 102. Mg(2+) is bound by residues serine 102, aspartate 241, aspartate 243, and aspartate 245. The residue at position 102 (serine 102) is a Phosphoserine.

This sequence belongs to the phosphohexose mutase family. Mg(2+) is required as a cofactor. In terms of processing, activated by phosphorylation.

The enzyme catalyses alpha-D-glucosamine 1-phosphate = D-glucosamine 6-phosphate. Functionally, catalyzes the conversion of glucosamine-6-phosphate to glucosamine-1-phosphate. The protein is Phosphoglucosamine mutase of Proteus mirabilis (strain HI4320).